The following is a 116-amino-acid chain: Holo-[acyl-carrier-protein] synthase (116 aa).

The Mg(2+) site is built by aspartate 5 and glutamate 50.

The protein belongs to the P-Pant transferase superfamily. AcpS family. The cofactor is Mg(2+).

The protein resides in the cytoplasm. It catalyses the reaction apo-[ACP] + CoA = holo-[ACP] + adenosine 3',5'-bisphosphate + H(+). Its function is as follows. Transfers the 4'-phosphopantetheine moiety from coenzyme A to a Ser of acyl-carrier-protein. The sequence is that of Holo-[acyl-carrier-protein] synthase from Campylobacter lari (strain RM2100 / D67 / ATCC BAA-1060).